The following is a 30-amino-acid chain: Serum amyloid P-component (30 aa).

Residues 1 to 30 (APQDLSGKMFIFPQETSTANVXLTARSQDF) form the Pentraxin (PTX) domain.

This sequence belongs to the pentraxin family. Homopentamer. Discoid arrangement of 5 covalently bound subunits. Ca(2+) serves as cofactor.

The protein localises to the secreted. This chain is Serum amyloid P-component, found in Anarhichas lupus (Atlantic wolffish).